A 728-amino-acid polypeptide reads, in one-letter code: Diacylglycerol kinase 1 (728 aa).

The helical transmembrane segment at 27–48 (GLMFSCFVAALVGILTIAYTAF) threads the bilayer. Phorbol-ester/DAG-type zinc fingers lie at residues 79 to 137 (PHSW…PKDC) and 149 to 212 (VHQW…GDIC). 2 disordered regions span residues 265-296 (KQTN…PTVN) and 308-336 (VMNG…TGSF). Residues 267-294 (TNETSADTGNSGSNCDESTESTADTGPT) show a composition bias toward polar residues. Over residues 310–319 (NGDSSNGDSD) the composition is skewed to low complexity. In terms of domain architecture, DAGKc spans 357 to 496 (SDARPLLVFI…LDRWKVSILN (140 aa)). Glycyl lysine isopeptide (Lys-Gly) (interchain with G-Cter in ubiquitin) cross-links involve residues Lys491 and Lys500.

It belongs to the eukaryotic diacylglycerol kinase family. Monomer. Expressed in roots, shoots, and leaves.

It localises to the membrane. The catalysed reaction is a 1,2-diacyl-sn-glycerol + ATP = a 1,2-diacyl-sn-glycero-3-phosphate + ADP + H(+). Its function is as follows. Phosphorylates the second messenger diacylglycerol (DAG) to generate phosphatidic acid (PA), another important signaling molecule. PA is required for plant development and responses to abiotic stress and pathogen attack. May be involved in the accumulation of PA during cold stress. The polypeptide is Diacylglycerol kinase 1 (DGK1) (Arabidopsis thaliana (Mouse-ear cress)).